Reading from the N-terminus, the 172-residue chain is Large ribosomal subunit protein uL10 (172 aa).

The protein belongs to the universal ribosomal protein uL10 family. As to quaternary structure, part of the ribosomal stalk of the 50S ribosomal subunit. The N-terminus interacts with L11 and the large rRNA to form the base of the stalk. The C-terminus forms an elongated spine to which L12 dimers bind in a sequential fashion forming a multimeric L10(L12)X complex.

In terms of biological role, forms part of the ribosomal stalk, playing a central role in the interaction of the ribosome with GTP-bound translation factors. The polypeptide is Large ribosomal subunit protein uL10 (Methylorubrum extorquens (strain CM4 / NCIMB 13688) (Methylobacterium extorquens)).